Consider the following 240-residue polypeptide: Methylthioribulose-1-phosphate dehydratase (240 aa).

Cys99 lines the substrate pocket. Residues His116 and His118 each contribute to the Zn(2+) site. Glu145 (proton donor/acceptor) is an active-site residue. Residue His201 coordinates Zn(2+).

It belongs to the aldolase class II family. MtnB subfamily. Requires Zn(2+) as cofactor.

The protein localises to the cytoplasm. The enzyme catalyses 5-(methylsulfanyl)-D-ribulose 1-phosphate = 5-methylsulfanyl-2,3-dioxopentyl phosphate + H2O. Its pathway is amino-acid biosynthesis; L-methionine biosynthesis via salvage pathway; L-methionine from S-methyl-5-thio-alpha-D-ribose 1-phosphate: step 2/6. Its function is as follows. Catalyzes the dehydration of methylthioribulose-1-phosphate (MTRu-1-P) into 2,3-diketo-5-methylthiopentyl-1-phosphate (DK-MTP-1-P). This is Methylthioribulose-1-phosphate dehydratase from Ajellomyces capsulatus (strain G186AR / H82 / ATCC MYA-2454 / RMSCC 2432) (Darling's disease fungus).